The sequence spans 678 residues: Elongation factor G 2 (678 aa).

The 275-residue stretch at Gln4–Gln278 folds into the tr-type G domain. GTP-binding positions include Ala13 to Thr20, Asp77 to His81, and Asn131 to Asp134.

Belongs to the TRAFAC class translation factor GTPase superfamily. Classic translation factor GTPase family. EF-G/EF-2 subfamily.

It is found in the cytoplasm. Catalyzes the GTP-dependent ribosomal translocation step during translation elongation. During this step, the ribosome changes from the pre-translocational (PRE) to the post-translocational (POST) state as the newly formed A-site-bound peptidyl-tRNA and P-site-bound deacylated tRNA move to the P and E sites, respectively. Catalyzes the coordinated movement of the two tRNA molecules, the mRNA and conformational changes in the ribosome. This chain is Elongation factor G 2, found in Hahella chejuensis (strain KCTC 2396).